The following is a 733-amino-acid chain: Phosphoribosylformylglycinamidine synthase subunit PurL (733 aa).

Residue His41 is part of the active site. Residues Tyr44 and Lys83 each contribute to the ATP site. Residue Glu85 coordinates Mg(2+). Residues 86–89 (SHNH) and Arg108 contribute to the substrate site. Catalysis depends on His87, which acts as the Proton acceptor. Position 109 (Asp109) interacts with Mg(2+). The disordered stretch occupies residues 212–232 (GASFASQELSEESEEKRPSVQ). Substrate is bound at residue Gln232. Asp260 contacts Mg(2+). 304–306 (ESQ) is a substrate binding site. Positions 488 and 525 each coordinate ATP. A Mg(2+)-binding site is contributed by Asn526. Ser528 is a binding site for substrate.

This sequence belongs to the FGAMS family. As to quaternary structure, monomer. Part of the FGAM synthase complex composed of 1 PurL, 1 PurQ and 2 PurS subunits.

It is found in the cytoplasm. The catalysed reaction is N(2)-formyl-N(1)-(5-phospho-beta-D-ribosyl)glycinamide + L-glutamine + ATP + H2O = 2-formamido-N(1)-(5-O-phospho-beta-D-ribosyl)acetamidine + L-glutamate + ADP + phosphate + H(+). It functions in the pathway purine metabolism; IMP biosynthesis via de novo pathway; 5-amino-1-(5-phospho-D-ribosyl)imidazole from N(2)-formyl-N(1)-(5-phospho-D-ribosyl)glycinamide: step 1/2. Its function is as follows. Part of the phosphoribosylformylglycinamidine synthase complex involved in the purines biosynthetic pathway. Catalyzes the ATP-dependent conversion of formylglycinamide ribonucleotide (FGAR) and glutamine to yield formylglycinamidine ribonucleotide (FGAM) and glutamate. The FGAM synthase complex is composed of three subunits. PurQ produces an ammonia molecule by converting glutamine to glutamate. PurL transfers the ammonia molecule to FGAR to form FGAM in an ATP-dependent manner. PurS interacts with PurQ and PurL and is thought to assist in the transfer of the ammonia molecule from PurQ to PurL. The polypeptide is Phosphoribosylformylglycinamidine synthase subunit PurL (Caldanaerobacter subterraneus subsp. tengcongensis (strain DSM 15242 / JCM 11007 / NBRC 100824 / MB4) (Thermoanaerobacter tengcongensis)).